We begin with the raw amino-acid sequence, 428 residues long: Enolase (428 aa).

Glutamine 162 is a binding site for (2R)-2-phosphoglycerate. Glutamate 204 functions as the Proton donor in the catalytic mechanism. Positions 241, 282, and 309 each coordinate Mg(2+). (2R)-2-phosphoglycerate is bound by residues lysine 334, arginine 363, serine 364, and lysine 385. Lysine 334 acts as the Proton acceptor in catalysis.

The protein belongs to the enolase family. It depends on Mg(2+) as a cofactor.

It is found in the cytoplasm. The protein localises to the secreted. The protein resides in the cell surface. The catalysed reaction is (2R)-2-phosphoglycerate = phosphoenolpyruvate + H2O. It participates in carbohydrate degradation; glycolysis; pyruvate from D-glyceraldehyde 3-phosphate: step 4/5. Functionally, catalyzes the reversible conversion of 2-phosphoglycerate (2-PG) into phosphoenolpyruvate (PEP). It is essential for the degradation of carbohydrates via glycolysis. The chain is Enolase from Mycobacterium ulcerans (strain Agy99).